The chain runs to 186 residues: Putative inactive recombination-promoting nuclease-like protein YjiQ (186 aa).

Belongs to the Rpn/YhgA-like nuclease family.

This pseudogene is the C-terminal fragment of low activity DNA endonuclease RpnD which probably yields 3'-hydroxyl ends. The intact protein can be seen in this entry (AC B7NGZ6). Expression of the repaired protein increases the frequency of recA-independent recombination, but also decreases viability probably via DNA damage; in a RecA strain expression has no effect on viability but does induce the SOS repair response. May play a role in horizontal gene transfer. The sequence is that of Putative inactive recombination-promoting nuclease-like protein YjiQ (yjiQ) from Escherichia coli (strain K12).